The sequence spans 183 residues: Nascent polypeptide-associated complex subunit beta (183 aa).

Positions 62–127 constitute an NAC-A/B domain; it reads GADDKKLQTT…GEEKELTELV (66 aa). Residues 150 to 183 form a disordered region; the sequence is QNMQKQAGTEGKKDEDEDDIPDLVEGENFESNVE. Residues 164 to 183 show a composition bias toward acidic residues; sequence EDEDDIPDLVEGENFESNVE.

Belongs to the NAC-beta family. Part of the nascent polypeptide-associated complex (NAC), consisting of egd2 and egd1. NAC associates with ribosomes via egd1.

The protein localises to the cytoplasm. It is found in the nucleus. Component of the nascent polypeptide-associated complex (NAC), a dynamic component of the ribosomal exit tunnel, protecting the emerging polypeptides from interaction with other cytoplasmic proteins to ensure appropriate nascent protein targeting. The NAC complex also promotes mitochondrial protein import by enhancing productive ribosome interactions with the outer mitochondrial membrane and blocks the inappropriate interaction of ribosomes translating non-secretory nascent polypeptides with translocation sites in the membrane of the endoplasmic reticulum. EGD1 may act as a transcription factor that exert a negative effect on the expression of several genes that are transcribed by RNA polymerase II. The sequence is that of Nascent polypeptide-associated complex subunit beta (egd1) from Neosartorya fischeri (strain ATCC 1020 / DSM 3700 / CBS 544.65 / FGSC A1164 / JCM 1740 / NRRL 181 / WB 181) (Aspergillus fischerianus).